The chain runs to 410 residues: Protein disulfide isomerase CRELD1 (410 aa).

A signal peptide spans 1–29 (MGMSRRMFLTVYGSLWLLLLLSRPGVSKP). Over 30 to 352 (QLCQTCQNLV…GLFDDITDDE (323 aa)) the chain is Extracellular. The CXXC motif lies at 32–35 (CQTC). Disulfide bonds link Cys-32–Cys-35, Cys-141–Cys-155, Cys-149–Cys-167, and Cys-169–Cys-178. An EGF-like 1 domain is found at 139–179 (LSCPGGTEKPCSGNGQCNGDGTRFGTGVCDCYTSYGGPVCM). 2 FU repeats span residues 194 to 243 (HLVC…DHCK) and 254 to 301 (SYEC…ELPK). The short motif at 264 to 267 (CIGC) is the CXXC element. Cystine bridges form between Cys-264/Cys-267, Cys-295/Cys-309, Cys-302/Cys-318, and Cys-320/Cys-331. In terms of domain architecture, EGF-like 2; calcium-binding spans 291 to 332 (DVDECDSELPKCKGSHEECVNTEGSFTCVCEKDYSRIDGMCR). The helical transmembrane segment at 353–373 (VVVLQQMFFGVVICALATLAA) threads the bilayer. Residue Lys-374 is a topological domain, cytoplasmic. Residues 375-395 (GDMVFTAIFIGAVAAMAGYWL) traverse the membrane as a helical segment. Residues 396-410 (SEKGDRALDSFMKGR) are Extracellular-facing.

The protein belongs to the CRELD family.

It is found in the membrane. The enzyme catalyses Catalyzes the rearrangement of -S-S- bonds in proteins.. Protein disulfide isomerase. Promotes the localization of acetylcholine receptors (AChRs) to the plasma membrane. This Xenopus tropicalis (Western clawed frog) protein is Protein disulfide isomerase CRELD1 (creld1).